Consider the following 360-residue polypeptide: Mannose-1-phosphate guanyltransferase beta-A (360 aa).

It belongs to the transferase hexapeptide repeat family.

It catalyses the reaction alpha-D-mannose 1-phosphate + GTP + H(+) = GDP-alpha-D-mannose + diphosphate. It participates in nucleotide-sugar biosynthesis; GDP-alpha-D-mannose biosynthesis; GDP-alpha-D-mannose from alpha-D-mannose 1-phosphate (GTP route): step 1/1. The protein is Mannose-1-phosphate guanyltransferase beta-A (gmppb-a) of Xenopus laevis (African clawed frog).